A 314-amino-acid chain; its full sequence is tRNA pseudouridine synthase B (314 aa).

Residue aspartate 47 is the Nucleophile of the active site.

The protein belongs to the pseudouridine synthase TruB family. Type 1 subfamily.

It carries out the reaction uridine(55) in tRNA = pseudouridine(55) in tRNA. Its function is as follows. Responsible for synthesis of pseudouridine from uracil-55 in the psi GC loop of transfer RNAs. In Vibrio vulnificus (strain CMCP6), this protein is tRNA pseudouridine synthase B.